A 107-amino-acid polypeptide reads, in one-letter code: Integration host factor subunit beta (107 aa).

A disordered region spans residues 56 to 107; sequence RPSRVGRNPKSGEKVLVPEKHVPHFKPGKELRERVDRNAGEPLKADAADDDL. A compositionally biased stretch (basic and acidic residues) spans 65 to 107; that stretch reads KSGEKVLVPEKHVPHFKPGKELRERVDRNAGEPLKADAADDDL.

The protein belongs to the bacterial histone-like protein family. In terms of assembly, heterodimer of an alpha and a beta chain.

Functionally, this protein is one of the two subunits of integration host factor, a specific DNA-binding protein that functions in genetic recombination as well as in transcriptional and translational control. The chain is Integration host factor subunit beta from Paraburkholderia phymatum (strain DSM 17167 / CIP 108236 / LMG 21445 / STM815) (Burkholderia phymatum).